A 238-amino-acid polypeptide reads, in one-letter code: Xyloglucan-specific endo-beta-1,4-glucanase A (238 aa).

The N-terminal stretch at 1 to 14 (MKLSLLSLATLASA) is a signal peptide.

This sequence belongs to the glycosyl hydrolase 12 (cellulase H) family.

It localises to the secreted. It catalyses the reaction xyloglucan + H2O = xyloglucan oligosaccharides.. In terms of biological role, catalyzes endohydrolysis of 1,4-beta-D-glucosidic linkages in xyloglucan with retention of the beta-configuration of the glycosyl residues. Specific for xyloglucan and does not hydrolyze other cell wall components. This is Xyloglucan-specific endo-beta-1,4-glucanase A (xgeA) from Aspergillus aculeatus.